Consider the following 335-residue polypeptide: Pyruvate dehydrogenase E1 component subunit beta (335 aa).

A thiamine diphosphate-binding site is contributed by Glu60. Ala161, Ile162, and Asn166 together coordinate K(+).

As to quaternary structure, heterodimer of an alpha and a beta chain. Requires thiamine diphosphate as cofactor.

The protein localises to the plastid. It is found in the chloroplast. The enzyme catalyses N(6)-[(R)-lipoyl]-L-lysyl-[protein] + pyruvate + H(+) = N(6)-[(R)-S(8)-acetyldihydrolipoyl]-L-lysyl-[protein] + CO2. Functionally, the pyruvate dehydrogenase complex catalyzes the overall conversion of pyruvate to acetyl-CoA and CO(2). It contains multiple copies of three enzymatic components: pyruvate dehydrogenase (E1), dihydrolipoamide acetyltransferase (E2) and lipoamide dehydrogenase (E3). The chain is Pyruvate dehydrogenase E1 component subunit beta (pdhB) from Chlorokybus atmophyticus (Soil alga).